We begin with the raw amino-acid sequence, 125 residues long: MLYGRIFFNSGVQLLSMADKKFSLIALVSFTALAIIVLYHNISPYLTPSDLIAQGKAENVQVVGKIVSVNGNTFQLSDGKNTITAVYNGTVQRYDAEVVVVGNWDGKVLHATKVLQKCHTEYKGG.

A helical transmembrane segment spans residues 21 to 43 (KFSLIALVSFTALAIIVLYHNIS).

The protein resides in the membrane. This is an uncharacterized protein from Archaeoglobus fulgidus (strain ATCC 49558 / DSM 4304 / JCM 9628 / NBRC 100126 / VC-16).